The primary structure comprises 219 residues: uncharacterized protein (219 aa).

This is an uncharacterized protein from Escherichia coli (Bacteriophage T4).